Reading from the N-terminus, the 1311-residue chain is Zinc finger protein 521 (1311 aa).

Residues 1–10 (MSRRKQAKPR) show a composition bias toward basic residues. A disordered region spans residues 1–37 (MSRRKQAKPRSLKDPNCKLEDKTEDGEALDCKKRPED). Residues 11–21 (SLKDPNCKLED) are compositionally biased toward basic and acidic residues. A C2H2-type 1; degenerate zinc finger spans residues 47–67 (HSCDSCLQVFESLSDITEHKI). Residues 81 to 108 (DPTCSWPASSPSSKDQTSPSHGEGCDFG) form a disordered region. Over residues 87–102 (PASSPSSKDQTSPSHG) the composition is skewed to low complexity. 7 consecutive C2H2-type zinc fingers follow at residues 118–140 (YPCQ…EQSH), 146–168 (FKCT…IKLH), 174–196 (YHCS…LKTH), 202–224 (YKCA…MQVH), 246–269 (QKCS…AECH), 281–304 (LQCV…EQVH), and 310–332 (NSCS…MDSH). The segment covering 349–358 (VGYTSVSSTT) has biased composition (low complexity). Residues 349–397 (VGYTSVSSTTPDSNLSVDSSTMVEAAPPIPKSRGRKRAAQQTPDMTGPS) form a disordered region. 2 stretches are compositionally biased toward polar residues: residues 359–370 (PDSNLSVDSSTM) and 387–397 (AQQTPDMTGPS). Residues 405–429 (YSCIYCNKQLFSSLAVLQIHLKTMH) form a C2H2-type 9; degenerate zinc finger. 3 C2H2-type zinc fingers span residues 437–460 (HICQ…KQVH), 477–500 (YQCN…RCSH), and 513–536 (FFCP…RQVH). Ser546 is subject to Phosphoserine. The C2H2-type 13; atypical zinc finger occupies 560 to 585 (YSCSYCTNSPIFNSVLKLNKHIKENH). Phosphoserine occurs at positions 605 and 608. C2H2-type zinc fingers lie at residues 634-656 (YICN…LKTH), 664-686 (LTCP…VTIH), 694-717 (YICE…LDMH), 722-745 (FRCT…AVKH), 752-775 (YRCT…KHNH), 783-805 (HKCI…ITTH), and 809-832 (YNCK…REKH). Residues 863 to 882 (TNSQESHNSHDGSEEDVDTS) form a disordered region. Residues 886 to 908 (YGCDICGAAYTMETLLQNHQLRD) form a C2H2-type 21; degenerate zinc finger. 3 consecutive C2H2-type zinc fingers follow at residues 930–952 (YKCN…MQTH), 959–981 (YMCP…KVTH), and 1020–1042 (FRCV…GTFH). The segment at 1065 to 1083 (YKCASCLKEFRSKQDLVKL) adopts a C2H2-type 25; degenerate zinc-finger fold. The segment at 1138-1161 (TRCSSCNVKFESESELQNHIQTIH) adopts a C2H2-type 26 zinc-finger fold. A Glycyl lysine isopeptide (Lys-Gly) (interchain with G-Cter in SUMO2) cross-link involves residue Lys1146. The segment covering 1168 to 1178 (SNSTQLKTPQV) has biased composition (polar residues). The segment at 1168–1188 (SNSTQLKTPQVSPMPRISPSQ) is disordered. 4 consecutive C2H2-type zinc fingers follow at residues 1195-1217 (YQCI…VANH), 1225-1247 (HECK…LIEH), 1256-1279 (FKCP…FSAH), and 1286-1309 (YDCT…MTQH).

This sequence belongs to the krueppel C2H2-type zinc-finger protein family. As to quaternary structure, interacts with EBF1. Interacts with SMAD1 and SMAD4. In terms of tissue distribution, predominantly expressed in hematopoietic cells. Present in organs and tissues that contain stem and progenitor cells, myeloid and/or lymphoid: placenta, spleen, lymph nodes, thymus, bone marrow and fetal liver. Within the hematopoietic system, it is abundant in CD34(+) cells but undetectable in mature peripheral blood leukocytes, and its levels rapidly decrease during the differentiation of CD34(+) cells in response to hemopoietins.

The protein localises to the nucleus. Transcription factor that can both act as an activator or a repressor depending on the context. Involved in BMP signaling and in the regulation of the immature compartment of the hematopoietic system. Associates with SMADs in response to BMP2 leading to activate transcription of BMP target genes. Acts as a transcriptional repressor via its interaction with EBF1, a transcription factor involved specification of B-cell lineage; this interaction preventing EBF1 to bind DNA and activate target genes. This chain is Zinc finger protein 521 (ZNF521), found in Homo sapiens (Human).